Here is a 326-residue protein sequence, read N- to C-terminus: MAFTPFPPRQPTASARLPLTLMTLDDWALATITGADSEKYMQGQVTADVSQMAEDQHLLAAHCDAKGKMWSNLRLFRDGDGFAWIERRSVREPQLTELKKYAVFSKVTIAPDDERVLLGVAGFQARAALANLFSELPSKEKQVVKEGATTLLWFEHPAERFLIVTDEATANMLTDKLRGEAELNNSQQWLALNIEAGFPVIDAANSGQFIPQATNLQALGGISFKKGCYTGQEMVARAKFRGANKRALWLLAGSASRLPEAGEDLELKMGENWRRTGTVLAAVKLEDGQVVVQVVMNNDMEPDSIFRVRDDANTLHIEPLPYSLEE.

Folate contacts are provided by tryptophan 27 and tryptophan 189.

It belongs to the tRNA-modifying YgfZ family.

The protein localises to the cytoplasm. Functionally, folate-binding protein involved in regulating the level of ATP-DnaA and in the modification of some tRNAs. It is probably a key factor in regulatory networks that act via tRNA modification, such as initiation of chromosomal replication. The sequence is that of tRNA-modifying protein YgfZ from Escherichia coli O139:H28 (strain E24377A / ETEC).